Here is a 90-residue protein sequence, read N- to C-terminus: Large ribosomal subunit protein bL27 (90 aa).

Residues 1 to 21 (MASKKAGGSTRNGRDSEAKRL) are disordered.

The protein belongs to the bacterial ribosomal protein bL27 family.

This chain is Large ribosomal subunit protein bL27, found in Neisseria meningitidis serogroup C (strain 053442).